We begin with the raw amino-acid sequence, 499 residues long: Potassium voltage-gated channel subfamily A member 2 (499 aa).

Positions 1-26 are disordered; it reads MTVATEDPADEAAALPGHPQDTYDPE. The tract at residues 1–125 is tetramerization domain; it reads MTVATEDPAD…YELGEEAMEM (125 aa). The Cytoplasmic segment spans residues 1 to 160; the sequence is MTVATEDPAD…LLFEYPESSG (160 aa). A helical transmembrane segment spans residues 161 to 182; that stretch reads PARIIAIVSVMVILISIVSFCL. The Extracellular segment spans residues 183 to 221; it reads ETLPIFRDENEDMHGSGMTFHTYSNSTAGYQQSTSFTDP. Residue asparagine 207 is glycosylated (N-linked (GlcNAc...) asparagine). A helical membrane pass occupies residues 222-243; the sequence is FFIVETLCIIWFSFEFLVRFFA. Cysteine 244 carries the S-palmitoyl cysteine lipid modification. Topologically, residues 244–254 are cytoplasmic; that stretch reads CPSKAGFFTNI. Residues 255–275 traverse the membrane as a helical segment; that stretch reads MNIIDIVAIIPYFITLGTELA. The Extracellular portion of the chain corresponds to 276–289; that stretch reads EKPEDAQQGQQAMS. Residues 290–310 traverse the membrane as a helical; Voltage-sensor segment; sequence LAILRVIRLVRVFRIFKLSRH. Residues 311-325 are Cytoplasmic-facing; the sequence is SKGLQILGQTLKASM. The interval 312–325 is S4-S5 linker; the sequence is KGLQILGQTLKASM. The helical transmembrane segment at 326–347 threads the bilayer; it reads RELGLLIFFLFIGVILFSSAVY. At 348 to 361 the chain is on the extracellular side; sequence FAEADERDSQFPSI. The segment at residues 362 to 373 is an intramembrane region (helical); sequence PDAFWWAVVSMT. Positions 374-379 match the Selectivity filter motif; sequence TVGYGD. An intramembrane segment occupies 374–381; the sequence is TVGYGDMV. Residues 382 to 388 lie on the Extracellular side of the membrane; that stretch reads PTTIGGK. A helical transmembrane segment spans residues 389-417; that stretch reads IVGSLCAIAGVLTIALPVPVIVSNFNYFY. Residues 418-499 lie on the Cytoplasmic side of the membrane; it reads HRETEGEEQA…VNITKMLTDV (82 aa). At tyrosine 429 the chain carries Phosphotyrosine. Residues serine 434, serine 440, serine 441, and serine 449 each carry the phosphoserine modification. The residue at position 458 (tyrosine 458) is a Phosphotyrosine. Position 468 is a phosphoserine (serine 468). The PDZ-binding signature appears at 497–499; sequence TDV.

Belongs to the potassium channel family. A (Shaker) (TC 1.A.1.2) subfamily. Kv1.2/KCNA2 sub-subfamily. As to quaternary structure, homotetramer and heterotetramer with other channel-forming alpha subunits, such as KCNA1, KCNA4, KCNA5, KCNA6 and KCNA7. Channel activity is regulated by interaction with the beta subunits, including KCNAB1 and KCNAB2. Identified in a complex with KCNA1 and KCNAB2. Identified in a complex with KCNA4 and FYN. Identified in a complex with KCNA5 and KCNAB1. Interacts with the beta subunit KCNAB1. Interacts with PTK2B. Interacts (via C-terminus) with CTTN. Interacts (via N-terminal cytoplasmic domain) with RHOA (GTP-bound form); this regulates channel activity by reducing location at the cell surface in response to CHRM1 activation. Interacts with DRD2. Interacts with SIGMAR1; cocaine consumption leads to increased interaction. Interacts with ADAM22. Interacts with CNTNAP2. Interacts (via C-terminus) with the PDZ domains of DLG1, DLG2 and DLG4. Interacts with ADAM11. Interacts with LYNX1. In terms of processing, phosphorylated on tyrosine residues; phosphorylation increases in response to ischemia. Phosphorylated on tyrosine residues by activated PTK2B/PYK2. Phosphorylation on tyrosine residues suppresses ion channel activity. Phosphorylated on tyrosine residues in response to CHRM1 activation; this abolishes interaction with CTTN. This is probably due to endocytosis of the phosphorylated channel subunits. Phosphorylated on serine residues in response to increased cAMP levels; phosphorylation is apparently not catalyzed by PKA. Post-translationally, N-glycosylated, with complex, sialylated N-glycans. In terms of tissue distribution, detected in portal vein myocytes (at protein level). Detected in portal vein. Brain, liver and kidney.

It is found in the cell membrane. Its subcellular location is the membrane. It localises to the cell projection. The protein resides in the axon. The protein localises to the synapse. It is found in the presynaptic cell membrane. Its subcellular location is the synaptosome. It localises to the endoplasmic reticulum membrane. The protein resides in the dendrite. The protein localises to the lamellipodium membrane. It is found in the cell junction. Its subcellular location is the paranodal septate junction. It catalyses the reaction K(+)(in) = K(+)(out). Inhibited by 4-aminopyridine (4-AP). Inhibited by dendrotoxin (DTX) and charybdotoxin (CTX), but not by tetraethylammonium (TEA). Inhibited by tityustoxin-K alpha (TsTX-Kalpha), a toxin that is highly specific for KCNA2. Inhibited by maurotoxin. Inhibited by kappaM conotoxins kappaM-RIIIJ and kappaM-RIIIK. In terms of biological role, voltage-gated potassium channel that mediates transmembrane potassium transport in excitable membranes, primarily in the brain and the central nervous system, but also in the cardiovascular system. Prevents aberrant action potential firing and regulates neuronal output. Forms tetrameric potassium-selective channels through which potassium ions pass in accordance with their electrochemical gradient. The channel alternates between opened and closed conformations in response to the voltage difference across the membrane. Can form functional homotetrameric channels and heterotetrameric channels that contain variable proportions of KCNA1, KCNA2, KCNA4, KCNA5, KCNA6, KCNA7, and possibly other family members as well; channel properties depend on the type of alpha subunits that are part of the channel. Channel properties are modulated by cytoplasmic beta subunits that regulate the subcellular location of the alpha subunits and promote rapid inactivation of delayed rectifier potassium channels. In vivo, membranes probably contain a mixture of heteromeric potassium channel complexes, making it difficult to assign currents observed in intact tissues to any particular potassium channel family member. Homotetrameric KCNA2 forms a delayed-rectifier potassium channel that opens in response to membrane depolarization, followed by slow spontaneous channel closure. In contrast, a heteromultimer formed by KCNA2 and KCNA4 shows rapid inactivation. Regulates neuronal excitability and plays a role as pacemaker in the regulation of neuronal action potentials. KCNA2-containing channels play a presynaptic role and prevent hyperexcitability and aberrant action potential firing. Response to toxins that are selective for KCNA2-containing potassium channels suggests that in Purkinje cells, dendritic subthreshold KCNA2-containing potassium channels prevent random spontaneous calcium spikes, suppressing dendritic hyperexcitability without hindering the generation of somatic action potentials, and thereby play an important role in motor coordination. Plays a role in the induction of long-term potentiation of neuron excitability in the CA3 layer of the hippocampus. May function as down-stream effector for G protein-coupled receptors and inhibit GABAergic inputs to basolateral amygdala neurons. May contribute to the regulation of neurotransmitter release, such as gamma-aminobutyric acid (GABA). Contributes to the regulation of the axonal release of the neurotransmitter dopamine. Reduced KCNA2 expression plays a role in the perception of neuropathic pain after peripheral nerve injury, but not acute pain. Plays a role in the regulation of the time spent in non-rapid eye movement (NREM) sleep. This chain is Potassium voltage-gated channel subfamily A member 2 (KCNA2), found in Oryctolagus cuniculus (Rabbit).